Reading from the N-terminus, the 301-residue chain is Glycine--tRNA ligase alpha subunit (301 aa).

It belongs to the class-II aminoacyl-tRNA synthetase family. Tetramer of two alpha and two beta subunits.

It is found in the cytoplasm. The enzyme catalyses tRNA(Gly) + glycine + ATP = glycyl-tRNA(Gly) + AMP + diphosphate. In Shewanella halifaxensis (strain HAW-EB4), this protein is Glycine--tRNA ligase alpha subunit.